Reading from the N-terminus, the 294-residue chain is tRNA-uridine aminocarboxypropyltransferase 1 (294 aa).

A disordered region spans residues 158 to 185 (DMQNDSSCEPSLKRPKCSQQYDKSKNEG). Positions 202 to 205 (DSTW) match the DXTW motif.

The protein belongs to the TDD superfamily. DTWD1 family.

It localises to the nucleus. It carries out the reaction a uridine in tRNA + S-adenosyl-L-methionine = a 3-[(3S)-3-amino-3-carboxypropyl]uridine in tRNA + S-methyl-5'-thioadenosine + H(+). Catalyzes the formation of 3-(3-amino-3-carboxypropyl)uridine (acp3U) at position 20 in the D-loop of several cytoplasmic tRNAs (acp3U(20)). The sequence is that of tRNA-uridine aminocarboxypropyltransferase 1 from Xenopus tropicalis (Western clawed frog).